The sequence spans 344 residues: Uroporphyrinogen decarboxylase (344 aa).

Residues Arg26 to Arg30, Asp75, Tyr150, Ser205, and His323 each bind substrate.

The protein belongs to the uroporphyrinogen decarboxylase family. As to quaternary structure, homodimer.

Its subcellular location is the cytoplasm. It carries out the reaction uroporphyrinogen III + 4 H(+) = coproporphyrinogen III + 4 CO2. It functions in the pathway porphyrin-containing compound metabolism; protoporphyrin-IX biosynthesis; coproporphyrinogen-III from 5-aminolevulinate: step 4/4. Catalyzes the decarboxylation of four acetate groups of uroporphyrinogen-III to yield coproporphyrinogen-III. This chain is Uroporphyrinogen decarboxylase, found in Corynebacterium diphtheriae (strain ATCC 700971 / NCTC 13129 / Biotype gravis).